Consider the following 203-residue polypeptide: tRNA (cytidine(56)-2'-O)-methyltransferase (203 aa).

S-adenosyl-L-methionine-binding positions include leucine 80, 109–113, and 127–134; these read GAEKV and IGNQPHSE. Residues 178–203 form a disordered region; sequence AEQDKAEGKATPGKNWENSGFTGDNP. Positions 193 to 203 are enriched in polar residues; sequence WENSGFTGDNP.

The protein belongs to the aTrm56 family. Homodimer.

It localises to the cytoplasm. It carries out the reaction cytidine(56) in tRNA + S-adenosyl-L-methionine = 2'-O-methylcytidine(56) in tRNA + S-adenosyl-L-homocysteine + H(+). Its function is as follows. Specifically catalyzes the AdoMet-dependent 2'-O-ribose methylation of cytidine at position 56 in tRNAs. This Pyrococcus horikoshii (strain ATCC 700860 / DSM 12428 / JCM 9974 / NBRC 100139 / OT-3) protein is tRNA (cytidine(56)-2'-O)-methyltransferase.